Here is a 545-residue protein sequence, read N- to C-terminus: Carboxypeptidase Y homolog A (545 aa).

A signal peptide spans 1–18 (MKSSLALALLVGGAIASG). A propeptide spanning residues 19-125 (PQQQVLREPV…RLDTYDLRVK (107 aa)) is cleaved from the precursor. Cystine bridges form between Cys179-Cys418, Cys313-Cys327, Cys337-Cys360, Cys344-Cys353, and Cys382-Cys388. Asn210 carries N-linked (GlcNAc...) asparagine glycosylation. Ser266 is an active-site residue. Asp457 is a catalytic residue. 2 N-linked (GlcNAc...) asparagine glycosylation sites follow: Asn487 and Asn507. The active site involves His518.

This sequence belongs to the peptidase S10 family.

It localises to the vacuole. The catalysed reaction is Release of a C-terminal amino acid with broad specificity.. In terms of biological role, vacuolar carboxypeptidase involved in degradation of small peptides. Digests preferentially peptides containing an aliphatic or hydrophobic residue in P1' position, as well as methionine, leucine or phenylalanine in P1 position of ester substrate. The sequence is that of Carboxypeptidase Y homolog A (CPYA) from Ajellomyces capsulatus (strain NAm1 / WU24) (Darling's disease fungus).